The chain runs to 80 residues: Gamma-conotoxin-like Am6.6 (80 aa).

The N-terminal stretch at 1 to 19 (MEKLTILLLVAAILMSTQA) is a signal peptide. The propeptide occupies 20–45 (LNQEQRQQAKINLLSKKKPSAERWRR). Cystine bridges form between cysteine 47/cysteine 61, cysteine 54/cysteine 65, and cysteine 60/cysteine 70. 2 positions are modified to 4-carboxyglutamate: glutamate 56 and glutamate 59. At glutamate 71 the chain carries 4-carboxyglutamate. The residue at position 76 (proline 76) is a 4-hydroxyproline. Positions 78 to 80 (RAI) are excised as a propeptide.

Belongs to the conotoxin O2 family. Expressed by the venom duct.

The protein resides in the secreted. Functionally, gamma-conotoxins may act on voltage-gated non-specific cation pacemaker channels (HCN). The polypeptide is Gamma-conotoxin-like Am6.6 (Conus amadis (Amadis cone)).